The following is a 531-amino-acid chain: Polyamine aminopropyltransferase 1 (531 aa).

7 helical membrane passes run 27 to 47 (FLLL…ELAL), 59 to 79 (VLQT…GSLA), 96 to 116 (GVLA…FAWL), 122 to 142 (AMIV…PLLM), 160 to 180 (MFAV…LFLL), 188 to 208 (GALV…VFIF), and 218 to 238 (AGLL…YVLA). Residues 205-476 (VFIFRRQTGR…VLARPGTEAP (272 aa)) form a spermidine synthase region. Residues 233–471 (TTYVLADDLE…GNWGFVLARP (239 aa)) form the PABS domain. Gln-263 provides a ligand contact to S-methyl-5'-thioadenosine. Residues His-298 and Asp-320 each contribute to the spermidine site. Residues Glu-340 and 374–375 (DA) each bind S-methyl-5'-thioadenosine. Asp-392 serves as the catalytic Proton acceptor.

Belongs to the spermidine/spermine synthase family. Homodimer or homotetramer.

It is found in the cell membrane. It catalyses the reaction S-adenosyl 3-(methylsulfanyl)propylamine + putrescine = S-methyl-5'-thioadenosine + spermidine + H(+). It functions in the pathway amine and polyamine biosynthesis; spermidine biosynthesis; spermidine from putrescine: step 1/1. In terms of biological role, catalyzes the irreversible transfer of a propylamine group from the amino donor S-adenosylmethioninamine (decarboxy-AdoMet) to putrescine (1,4-diaminobutane) to yield spermidine. The sequence is that of Polyamine aminopropyltransferase 1 from Streptomyces coelicolor (strain ATCC BAA-471 / A3(2) / M145).